A 182-amino-acid polypeptide reads, in one-letter code: Homeobox protein pnx (182 aa).

Residues 1 to 34 (MHEETSNSTLQGKTSFSIADILDPAKFNGTRETR) form an important for interaction with tle3a region. The disordered stretch occupies residues 24–63 (PAKFNGTRETREISNNRESPKTTSPTQDPSAPNIANASAA). Over residues 29 to 43 (GTRETREISNNRESP) the composition is skewed to basic and acidic residues. The span at 52–63 (PSAPNIANASAA) shows a compositional bias: low complexity. Positions 67-126 (SKRIRTAFTLDQLRILERSFQSSHYLSVFERHCIASALGLSETQVKIWFQNRRTKWKKEL) form a DNA-binding region, homeobox.

The protein belongs to the NK-1 homeobox family. Interacts with tle3a.

It localises to the nucleus. Transcriptional repressor. Activity as a repressor is enhanced by binding to the corepressor tle3a. The sequence is that of Homeobox protein pnx from Danio rerio (Zebrafish).